Reading from the N-terminus, the 369-residue chain is Protein phosphatase 1 regulatory inhibitor subunit PPP1R8 homolog (369 aa).

Positions 1–11 (MYGRSGLDRFK) are enriched in basic and acidic residues. The interval 1–26 (MYGRSGLDRFKKSQTSEPFSVSANPP) is disordered. Residues 13 to 23 (SQTSEPFSVSA) show a composition bias toward polar residues. The FHA domain maps to 87-138 (HIFGRQHQTCDFVLDHQSVSRQHAAVVPHKNGSIFVIDLGSAHGTFVANERL). The disordered stretch occupies residues 345–369 (VSQPAAETECGGVGEEDDNDDLFGD). Residues 358 to 369 (GEEDDNDDLFGD) are compositionally biased toward acidic residues.

As to quaternary structure, interacts with human protein phosphatase PPP1C.

Inhibitor of protein-phosphatase 1 (PP1). Binds to and inhibits PP1 activity. In Arabidopsis thaliana (Mouse-ear cress), this protein is Protein phosphatase 1 regulatory inhibitor subunit PPP1R8 homolog.